The primary structure comprises 837 residues: Protein translocase subunit SecA (837 aa).

ATP is bound by residues Q85, 103 to 107 (GEGKT), and D493. Zn(2+)-binding residues include C821, C823, C832, and H833.

This sequence belongs to the SecA family. Monomer and homodimer. Part of the essential Sec protein translocation apparatus which comprises SecA, SecYEG and auxiliary proteins SecDF. Other proteins may also be involved. Requires Zn(2+) as cofactor.

The protein resides in the cell membrane. It is found in the cytoplasm. It carries out the reaction ATP + H2O + cellular proteinSide 1 = ADP + phosphate + cellular proteinSide 2.. In terms of biological role, part of the Sec protein translocase complex. Interacts with the SecYEG preprotein conducting channel. Has a central role in coupling the hydrolysis of ATP to the transfer of proteins into and across the cell membrane, serving as an ATP-driven molecular motor driving the stepwise translocation of polypeptide chains across the membrane. The sequence is that of Protein translocase subunit SecA from Streptococcus pneumoniae (strain P1031).